The primary structure comprises 664 residues: Frizzled-3 (664 aa).

Residues 1-16 (MAAYLISFIWVSVILA) form the signal peptide. The Extracellular segment spans residues 17 to 204 (QKSMGHSLFA…REELSFARYF (188 aa)). The FZ domain occupies 22–135 (HSLFACEPIT…CSRFPDCDEP (114 aa)). Disulfide bonds link Cys-27–Cys-88, Cys-35–Cys-81, Cys-72–Cys-109, Cys-98–Cys-132, and Cys-102–Cys-126. The N-linked (GlcNAc...) asparagine glycan is linked to Asn-41. The helical transmembrane segment at 205-225 (IGVISIVCLSATLFTFLTFLI) threads the bilayer. Residues 226-236 (DVTRFRYPERP) lie on the Cytoplasmic side of the membrane. The chain crosses the membrane as a helical span at residues 237–257 (IIFYAVCYMMVSLIFFIGFLL). Residues 258-287 (EDKVACNGANPSQYKASTVTQGSHNKACTM) lie on the Extracellular side of the membrane. Residues 288–308 (LFMVLYFFTMAGSVWWVILTI) form a helical membrane-spanning segment. Residues 309-327 (TWFLAAVPKWGSEAIEKKA) are Cytoplasmic-facing. A helical transmembrane segment spans residues 328–348 (LLFHASAWGIPGTLTIILLAM). The Extracellular segment spans residues 349–373 (NKIEGDNISGVCFVGLYDVHALRYF). Asn-355 is a glycosylation site (N-linked (GlcNAc...) asparagine). A helical transmembrane segment spans residues 374–394 (VLAPLCLDVVVGVSLLLAGII). Over 395-419 (SLNRVRIEIPLEKENQDKLVKFMIR) the chain is Cytoplasmic. The chain crosses the membrane as a helical span at residues 420-440 (IGVFSILYLVPLLVVIGCYFY). Residues 441–476 (EQAYRGVWETTWVQERCREYHIPCPYKVTQTSRPDL) lie on the Extracellular side of the membrane. A helical transmembrane segment spans residues 477–497 (ILFLMKYLMLLVVGIPSVFWV). The Cytoplasmic segment spans residues 498–664 (GSKKTCFEWA…RVIEADATSA (167 aa)). The Lys-Thr-X-X-X-Trp motif, mediates interaction with the PDZ domain of Dvl family members motif lies at 501–506 (KTCFEW). The tract at residues 537–664 (RDPNTPIVRK…RVIEADATSA (128 aa)) is disordered. Polar residues-rich tracts occupy residues 549–564 (GTST…STQL) and 573–585 (KAGS…SSYH).

Belongs to the G-protein coupled receptor Fz/Smo family. In terms of tissue distribution, expression restricted to the early nervous system.

It localises to the membrane. It is found in the cell membrane. Its subcellular location is the cell surface. The protein resides in the apical cell membrane. Receptor for Wnt proteins. Most of frizzled receptors are coupled to the beta-catenin canonical signaling pathway, which leads to the activation of disheveled proteins, inhibition of GSK-3 kinase, nuclear accumulation of beta-catenin and activation of Wnt target genes. A second signaling pathway involving PKC and calcium fluxes has been seen for some family members, but it is not yet clear if it represents a distinct pathway or if it can be integrated in the canonical pathway, as PKC seems to be required for Wnt-mediated inactivation of GSK-3 kinase. Both pathways seem to involve interactions with G-proteins. Activated by Wnt8. Involved in transduction and intercellular transmission of polarity information during tissue morphogenesis and/or in differentiated tissues. Plays a role in controlling early axon growth and guidance processes necessary for the formation of a subset of central and peripheral major fiber tracts. Involved in the migration of cranial neural crest cells. May also be implicated in the transmission of sensory information from the trunk and limbs to the brain. Controls commissural sensory axons guidance after midline crossing along the anterior-posterior axis in the developing spinal cord in a Wnt-dependent signaling pathway. Together with FZD6, is involved in the neural tube closure and plays a role in the regulation of the establishment of planar cell polarity (PCP). Promotes neurogenesis by maintaining sympathetic neuroblasts within the cell cycle in a beta-catenin-dependent manner. The sequence is that of Frizzled-3 (fzd3) from Xenopus laevis (African clawed frog).